The sequence spans 1104 residues: Transposon Ty4-P Gag-Pol polyprotein (1104 aa).

The stretch at 48 to 112 forms a coiled coil; the sequence is VKQYQRNLNR…VEKIQLLETN (65 aa). Positions 381–501 are ty4 protease; it reads QQQLKSSAKE…KTKMVLSRKY (121 aa). Catalysis depends on Asp414, which acts as the For protease activity; shared with dimeric partner. Residues 539 to 599 form an integrase-type zinc finger-like region; that stretch reads AIKPTSSPGF…EPNEFWCQTC (61 aa). One can recognise an Integrase catalytic domain in the interval 619–786; the sequence is TDHEPGSSWC…LPLKAISRQP (168 aa). Residues Asp630 and Asp695 each coordinate Mg(2+).

The protease is a homodimer, whose active site consists of two apposed aspartic acid residues. In terms of processing, proteolytically processed into capsid protein (CA), Ty4 protease (PR), integrase (IN) and reverse transcriptase/ribonuclease H (RT) proteins. Initially, virus-like particles (VLPs) are composed of the structural unprocessed proteins Gag and Gag-Pol, and also contain the host initiator methionine tRNA (tRNA(i)-Met) which serves as a primer for minus-strand DNA synthesis, and a dimer of genomic Ty RNA. Processing of the polyproteins occurs within the particle and proceeds by an ordered pathway, called maturation. First, the protease (PR) is released by autocatalytic cleavage of the Gag-Pol polyprotein, and this cleavage is a prerequisite for subsequent processing at the remaining sites to release the mature structural and catalytic proteins. Maturation takes place prior to the RT reaction and is required to produce transposition-competent VLPs.

The protein resides in the cytoplasm. The protein localises to the nucleus. The enzyme catalyses DNA(n) + a 2'-deoxyribonucleoside 5'-triphosphate = DNA(n+1) + diphosphate. It catalyses the reaction Endonucleolytic cleavage to 5'-phosphomonoester.. Functionally, capsid protein (CA) is the structural component of the virus-like particle (VLP), forming the shell that encapsulates the retrotransposons dimeric RNA genome. The aspartyl protease (PR) mediates the proteolytic cleavages of the Gag and Gag-Pol polyproteins after assembly of the VLP. Its function is as follows. Reverse transcriptase/ribonuclease H (RT) is a multifunctional enzyme that catalyzes the conversion of the retro-elements RNA genome into dsDNA within the VLP. The enzyme displays a DNA polymerase activity that can copy either DNA or RNA templates, and a ribonuclease H (RNase H) activity that cleaves the RNA strand of RNA-DNA heteroduplexes during plus-strand synthesis and hydrolyzes RNA primers. The conversion leads to a linear dsDNA copy of the retrotransposon that includes long terminal repeats (LTRs) at both ends. In terms of biological role, integrase (IN) targets the VLP to the nucleus, where a subparticle preintegration complex (PIC) containing at least integrase and the newly synthesized dsDNA copy of the retrotransposon must transit the nuclear membrane. Once in the nucleus, integrase performs the integration of the dsDNA into the host genome. In Saccharomyces cerevisiae (strain ATCC 204508 / S288c) (Baker's yeast), this protein is Transposon Ty4-P Gag-Pol polyprotein (TY4B-P).